A 248-amino-acid polypeptide reads, in one-letter code: Putative insertion sequence ATP-binding protein y4uH (248 aa).

106–113 is a binding site for ATP; the sequence is GPTGIGKS.

It belongs to the IS21/IS1162 putative ATP-binding protein family.

This Sinorhizobium fredii (strain NBRC 101917 / NGR234) protein is Putative insertion sequence ATP-binding protein y4uH.